A 61-amino-acid polypeptide reads, in one-letter code: Small ribosomal subunit protein uS14 (61 aa).

Positions 24, 27, 40, and 43 each coordinate Zn(2+).

The protein belongs to the universal ribosomal protein uS14 family. Zinc-binding uS14 subfamily. As to quaternary structure, part of the 30S ribosomal subunit. Contacts proteins S3 and S10. It depends on Zn(2+) as a cofactor.

Binds 16S rRNA, required for the assembly of 30S particles and may also be responsible for determining the conformation of the 16S rRNA at the A site. This is Small ribosomal subunit protein uS14 from Mycobacterium leprae (strain Br4923).